A 204-amino-acid polypeptide reads, in one-letter code: Somatotropin (204 aa).

The first 17 residues, Met-1–Ser-17, serve as a signal peptide directing secretion. Pyrrolidone carboxylic acid is present on Gln-18. His-36 contributes to the Zn(2+) binding site. Cys-69 and Cys-177 form a disulfide bridge. Residue Glu-186 coordinates Zn(2+). Cys-194 and Cys-202 are oxidised to a cystine.

It belongs to the somatotropin/prolactin family.

The protein localises to the secreted. Growth hormone plays an important role in growth control and involved in the regulation of several anabolic processes. This is Somatotropin (gh) from Oreochromis mossambicus (Mozambique tilapia).